We begin with the raw amino-acid sequence, 30 residues long: GIPCGESCVWIPCISSALGCSCKNKVCYRN.

Positions 1 to 30 form a cross-link, cyclopeptide (Gly-Asn); the sequence is GIPCGESCVWIPCISSALGCSCKNKVCYRN. 3 disulfide bridges follow: cysteine 4-cysteine 20, cysteine 8-cysteine 22, and cysteine 13-cysteine 27.

Post-translationally, this is a cyclic peptide. As to expression, expressed in fruit, pedicel, stem and root but not in leaf (at protein level).

Probably participates in a plant defense mechanism. The sequence is that of Chassatide C3 from Chassalia chartacea (Chassalia curviflora).